Reading from the N-terminus, the 492-residue chain is 3-octaprenyl-4-hydroxybenzoate carboxy-lyase (492 aa).

Asparagine 177 lines the Mn(2+) pocket. Residues 180-182, 194-196, and 199-200 contribute to the prenylated FMN site; these read IYR, RWL, and RG. Mn(2+) is bound at residue glutamate 243. Residue aspartate 292 is the Proton donor of the active site.

The protein belongs to the UbiD family. As to quaternary structure, homohexamer. Requires prenylated FMN as cofactor. It depends on Mn(2+) as a cofactor.

The protein resides in the cell membrane. The catalysed reaction is a 4-hydroxy-3-(all-trans-polyprenyl)benzoate + H(+) = a 2-(all-trans-polyprenyl)phenol + CO2. It participates in cofactor biosynthesis; ubiquinone biosynthesis. Catalyzes the decarboxylation of 3-octaprenyl-4-hydroxy benzoate to 2-octaprenylphenol, an intermediate step in ubiquinone biosynthesis. This chain is 3-octaprenyl-4-hydroxybenzoate carboxy-lyase, found in Neisseria meningitidis serogroup B (strain ATCC BAA-335 / MC58).